The following is a 457-amino-acid chain: Siroheme synthase (457 aa).

The precorrin-2 dehydrogenase /sirohydrochlorin ferrochelatase stretch occupies residues M1–T204. NAD(+)-binding positions include D22 to V23 and L43 to A44. S128 carries the phosphoserine modification. Positions G216–H457 are uroporphyrinogen-III C-methyltransferase. P225 contacts S-adenosyl-L-methionine. The Proton acceptor role is filled by D248. The Proton donor role is filled by K270. S-adenosyl-L-methionine-binding positions include G301–D303, I306, T331–A332, M382, and G411.

The protein in the N-terminal section; belongs to the precorrin-2 dehydrogenase / sirohydrochlorin ferrochelatase family. It in the C-terminal section; belongs to the precorrin methyltransferase family.

It catalyses the reaction uroporphyrinogen III + 2 S-adenosyl-L-methionine = precorrin-2 + 2 S-adenosyl-L-homocysteine + H(+). It carries out the reaction precorrin-2 + NAD(+) = sirohydrochlorin + NADH + 2 H(+). The enzyme catalyses siroheme + 2 H(+) = sirohydrochlorin + Fe(2+). The protein operates within cofactor biosynthesis; adenosylcobalamin biosynthesis; precorrin-2 from uroporphyrinogen III: step 1/1. It functions in the pathway cofactor biosynthesis; adenosylcobalamin biosynthesis; sirohydrochlorin from precorrin-2: step 1/1. Its pathway is porphyrin-containing compound metabolism; siroheme biosynthesis; precorrin-2 from uroporphyrinogen III: step 1/1. It participates in porphyrin-containing compound metabolism; siroheme biosynthesis; siroheme from sirohydrochlorin: step 1/1. The protein operates within porphyrin-containing compound metabolism; siroheme biosynthesis; sirohydrochlorin from precorrin-2: step 1/1. Its function is as follows. Multifunctional enzyme that catalyzes the SAM-dependent methylations of uroporphyrinogen III at position C-2 and C-7 to form precorrin-2 via precorrin-1. Then it catalyzes the NAD-dependent ring dehydrogenation of precorrin-2 to yield sirohydrochlorin. Finally, it catalyzes the ferrochelation of sirohydrochlorin to yield siroheme. This is Siroheme synthase from Escherichia coli (strain 55989 / EAEC).